We begin with the raw amino-acid sequence, 369 residues long: MTTHAAAPSTRVLIVDDSAAARAMFKVIVESDPALQVMAAVPDAFAAARAMRTELPDVILLDLELPSMDGLTFLRKIMQQHPIPVVVCSSHVGAGTEAMVSALELGAREVISKPAARNDLERQEASIRICDAIRAATETTRRRSQPEPRPLAPGPKLTADEILPARPPRPVPETMPVVCIGASTGGTEALRDVLTALPASAPPIVIVQHMPRGFTAAFARRLDSLCAIEVLEAEDEMQVMPGRAIIAQGDRHLLLRRRNQGYRVSVLDGAYVCRHRPSVDVLFRSAAQEAGGNALGVIMTGMGDDGARCMAEMRAAGAETIAQNEESCVVYGMPREAVAHGGVGKVEPLDRLAARIMEFGRRHTERTVR.

The Response regulatory domain maps to Arg-11–Arg-128. Asp-62 is modified (4-aspartylphosphate). The interval Ala-136 to Pro-168 is disordered. The 189-residue stretch at Pro-170–Glu-358 folds into the CheB-type methylesterase domain. Catalysis depends on residues Ser-183, His-209, and Asp-305.

Belongs to the CheB family. Phosphorylated in vitro by CheA2, but not by CheA1. Phosphorylation of the N-terminal regulatory domain activates the methylesterase activity.

Its subcellular location is the cytoplasm. It catalyses the reaction [protein]-L-glutamate 5-O-methyl ester + H2O = L-glutamyl-[protein] + methanol + H(+). The enzyme catalyses L-glutaminyl-[protein] + H2O = L-glutamyl-[protein] + NH4(+). Involved in chemotaxis. Part of a chemotaxis signal transduction system that modulates chemotaxis in response to various stimuli. Catalyzes the demethylation of specific methylglutamate residues introduced into the chemoreceptors (methyl-accepting chemotaxis proteins or MCP) by CheR. Also mediates the irreversible deamidation of specific glutamine residues to glutamic acid. This chain is Protein-glutamate methylesterase/protein-glutamine glutaminase of group 3 operon (cheB3), found in Cereibacter sphaeroides (Rhodobacter sphaeroides).